We begin with the raw amino-acid sequence, 166 residues long: Lipoprotein signal peptidase (166 aa).

4 helical membrane-spanning segments follow: residues 9 to 29 (ASGALAPWLGISLIVILFDQL), 45 to 65 (ALTSFFNLVLVYNRGAAFGFL), 71 to 91 (WQRWAFTALGIGATLVICYLL), and 99 to 119 (LFSLSLALILGGALGNVIDRL). Active-site residues include Asp-126 and Asp-144. A helical transmembrane segment spans residues 135–155 (WHFPAFNLADSAITVGAVLLI).

This sequence belongs to the peptidase A8 family.

It localises to the cell inner membrane. The enzyme catalyses Release of signal peptides from bacterial membrane prolipoproteins. Hydrolyzes -Xaa-Yaa-Zaa-|-(S,diacylglyceryl)Cys-, in which Xaa is hydrophobic (preferably Leu), and Yaa (Ala or Ser) and Zaa (Gly or Ala) have small, neutral side chains.. It functions in the pathway protein modification; lipoprotein biosynthesis (signal peptide cleavage). This protein specifically catalyzes the removal of signal peptides from prolipoproteins. This Burkholderia vietnamiensis (strain G4 / LMG 22486) (Burkholderia cepacia (strain R1808)) protein is Lipoprotein signal peptidase.